The sequence spans 492 residues: Glutamyl-tRNA(Gln) amidotransferase subunit A (492 aa).

Active-site charge relay system residues include lysine 79 and serine 154. Serine 178 (acyl-ester intermediate) is an active-site residue.

It belongs to the amidase family. GatA subfamily. In terms of assembly, heterotrimer of A, B and C subunits.

The enzyme catalyses L-glutamyl-tRNA(Gln) + L-glutamine + ATP + H2O = L-glutaminyl-tRNA(Gln) + L-glutamate + ADP + phosphate + H(+). In terms of biological role, allows the formation of correctly charged Gln-tRNA(Gln) through the transamidation of misacylated Glu-tRNA(Gln) in organisms which lack glutaminyl-tRNA synthetase. The reaction takes place in the presence of glutamine and ATP through an activated gamma-phospho-Glu-tRNA(Gln). In Acinetobacter baumannii (strain AB0057), this protein is Glutamyl-tRNA(Gln) amidotransferase subunit A.